Reading from the N-terminus, the 859-residue chain is Valine--tRNA ligase (859 aa).

The 'HIGH' region signature appears at 46–56 (PTVSGQLHIGH). The 'KMSKS' region signature appears at 583-587 (KMSKS). Lys586 is a binding site for ATP.

This sequence belongs to the class-I aminoacyl-tRNA synthetase family. ValS type 2 subfamily. As to quaternary structure, monomer.

The protein resides in the cytoplasm. The enzyme catalyses tRNA(Val) + L-valine + ATP = L-valyl-tRNA(Val) + AMP + diphosphate. Its function is as follows. Catalyzes the attachment of valine to tRNA(Val). As ValRS can inadvertently accommodate and process structurally similar amino acids such as threonine, to avoid such errors, it has a 'posttransfer' editing activity that hydrolyzes mischarged Thr-tRNA(Val) in a tRNA-dependent manner. In Rickettsia felis (strain ATCC VR-1525 / URRWXCal2) (Rickettsia azadi), this protein is Valine--tRNA ligase.